The primary structure comprises 219 residues: Endonuclease III (219 aa).

Positions 109 to 128 constitute a HhH domain; it reads RDELVKLPGVGRKTANVVVS. Residues C189, C196, C199, and C205 each coordinate [4Fe-4S] cluster.

This sequence belongs to the Nth/MutY family. [4Fe-4S] cluster serves as cofactor.

The enzyme catalyses 2'-deoxyribonucleotide-(2'-deoxyribose 5'-phosphate)-2'-deoxyribonucleotide-DNA = a 3'-end 2'-deoxyribonucleotide-(2,3-dehydro-2,3-deoxyribose 5'-phosphate)-DNA + a 5'-end 5'-phospho-2'-deoxyribonucleoside-DNA + H(+). In terms of biological role, DNA repair enzyme that has both DNA N-glycosylase activity and AP-lyase activity. The DNA N-glycosylase activity releases various damaged pyrimidines from DNA by cleaving the N-glycosidic bond, leaving an AP (apurinic/apyrimidinic) site. The AP-lyase activity cleaves the phosphodiester bond 3' to the AP site by a beta-elimination, leaving a 3'-terminal unsaturated sugar and a product with a terminal 5'-phosphate. The protein is Endonuclease III of Bacillus subtilis (strain 168).